Consider the following 375-residue polypeptide: ATP-sensitive inward rectifier potassium channel 15 (375 aa).

The Cytoplasmic segment spans residues 1 to 60; sequence MDAIHIGMSSTPLVKHTAGAGLKANRPRVMSKSGHSNVRIDKVDGIYLLYLQDLWTTVID. A helical transmembrane segment spans residues 61–87; it reads MKWRYKLTLFAATFVMTWFLFGVIYYA. Residues 88 to 113 lie on the Extracellular side of the membrane; the sequence is IAFIHGDLEPGEPISNHTPCIMKVDS. The segment at residues 114–130 is an intramembrane region (helical; Pore-forming); sequence LTGAFLFSLESQTTIGY. The short motif at 127–132 is the Selectivity filter element; it reads TIGYGV. The Extracellular portion of the chain corresponds to 131-139; that stretch reads GVRSITEEC. A helical membrane pass occupies residues 140-165; sequence PHAIFLLVAQLVITTLIEIFITGTFL. The Cytoplasmic portion of the chain corresponds to 166 to 375; sequence AKIARPKKRA…RTLLLQQSNV (210 aa).

Belongs to the inward rectifier-type potassium channel (TC 1.A.2.1) family. KCNJ15 subfamily. In terms of assembly, can form heteromultimeric channels with Kir5.1/KCNJ16. Interacts with PATJ.

It localises to the membrane. The protein localises to the cell membrane. It catalyses the reaction K(+)(in) = K(+)(out). Its activity is regulated as follows. Channel activity is regulated by variations of cytosolic pH; reversibly inhibited by acidic pH values. Inhibited by Ba(2+) and Cs(+) in a voltage-dependent manner. Its function is as follows. Inward rectifier potassium channels are characterized by a greater tendency to allow potassium to flow into the cell rather than out of it. Their voltage dependence is regulated by the concentration of extracellular potassium; as external potassium is raised, the voltage range of the channel opening shifts to more positive voltages. The inward rectification is mainly due to the blockage of outward current by internal magnesium. This is ATP-sensitive inward rectifier potassium channel 15 (KCNJ15) from Homo sapiens (Human).